Here is a 387-residue protein sequence, read N- to C-terminus: S-adenosylmethionine synthase (387 aa).

His-15 serves as a coordination point for ATP. Asp-17 contributes to the Mg(2+) binding site. Residue Glu-43 coordinates K(+). Positions 56 and 99 each coordinate L-methionine. The tract at residues 99–109 (QSPDIAQGVNN) is flexible loop. ATP is bound by residues 166–168 (DAK), 232–233 (RF), Asp-241, 247–248 (RK), Ala-264, and Lys-268. Asp-241 is a binding site for L-methionine. Residue Lys-272 participates in L-methionine binding.

Belongs to the AdoMet synthase family. In terms of assembly, homotetramer; dimer of dimers. Requires Mg(2+) as cofactor. K(+) is required as a cofactor.

It is found in the cytoplasm. It catalyses the reaction L-methionine + ATP + H2O = S-adenosyl-L-methionine + phosphate + diphosphate. Its pathway is amino-acid biosynthesis; S-adenosyl-L-methionine biosynthesis; S-adenosyl-L-methionine from L-methionine: step 1/1. Its function is as follows. Catalyzes the formation of S-adenosylmethionine (AdoMet) from methionine and ATP. The overall synthetic reaction is composed of two sequential steps, AdoMet formation and the subsequent tripolyphosphate hydrolysis which occurs prior to release of AdoMet from the enzyme. This chain is S-adenosylmethionine synthase, found in Methylobacillus flagellatus (strain ATCC 51484 / DSM 6875 / VKM B-1610 / KT).